We begin with the raw amino-acid sequence, 727 residues long: Glucans biosynthesis glucosyltransferase H (727 aa).

The tract at residues 18 to 45 (SAMPNERPGAMEPQSLTEMPEGFPRRST) is disordered. The next 7 helical transmembrane spans lie at 58 to 78 (FFVV…MGAV), 90 to 110 (LVLL…CSGI), 278 to 298 (LQQF…GWWV), 408 to 428 (IMAY…LMLA), 460 to 480 (LFYI…LLLL), 496 to 516 (IFSV…MMFI), and 572 to 592 (LLAW…ISAW).

Belongs to the glycosyltransferase 2 family. OpgH subfamily.

Its subcellular location is the cell inner membrane. The protein operates within glycan metabolism; osmoregulated periplasmic glucan (OPG) biosynthesis. Involved in the biosynthesis of osmoregulated periplasmic glucans (OPGs). In Shewanella putrefaciens (strain CN-32 / ATCC BAA-453), this protein is Glucans biosynthesis glucosyltransferase H.